The chain runs to 159 residues: Glucosamine 6-phosphate N-acetyltransferase (159 aa).

At serine 2 the chain carries N-acetylserine. D-glucosamine 6-phosphate contacts are provided by residues threonine 28, 86–89 (KIIH), and 98–100 (EDI). The N-acetyltransferase domain maps to 28-159 (TTVGTITPES…NAGVEMQIRK (132 aa)). Acetyl-CoA contacts are provided by residues 100–102 (IAV) and 108–113 (GQGLGK). D-glucosamine 6-phosphate-binding positions include 129 to 130 (YK) and aspartate 134. Position 143-145 (143-145 (YEK)) interacts with acetyl-CoA. Arginine 158 serves as a coordination point for D-glucosamine 6-phosphate.

Belongs to the acetyltransferase family. GNA1 subfamily. Homodimer.

It carries out the reaction D-glucosamine 6-phosphate + acetyl-CoA = N-acetyl-D-glucosamine 6-phosphate + CoA + H(+). It functions in the pathway nucleotide-sugar biosynthesis; UDP-N-acetyl-alpha-D-glucosamine biosynthesis; N-acetyl-alpha-D-glucosamine 1-phosphate from alpha-D-glucosamine 6-phosphate (route I): step 1/2. In Saccharomyces cerevisiae (strain ATCC 204508 / S288c) (Baker's yeast), this protein is Glucosamine 6-phosphate N-acetyltransferase (GNA1).